The following is a 62-amino-acid chain: MARYRHSRSRXRSRYRRRRRXRSRYRSXRRRYRGRRRRRSRRGRRRRGYSRXRYSRRRRRRY.

The interval 1–62 (MARYRHSRSR…RYSRRRRRRY (62 aa)) is disordered.

It belongs to the protamine P1 family. As to expression, testis.

It localises to the nucleus. The protein resides in the chromosome. Its function is as follows. Protamines substitute for histones in the chromatin of sperm during the haploid phase of spermatogenesis. They compact sperm DNA into a highly condensed, stable and inactive complex. This is Sperm protamine P1 (PRM1) from Dendrolagus dorianus (Doria's tree-kangaroo).